A 477-amino-acid polypeptide reads, in one-letter code: Ankyrin repeat, SAM and basic leucine zipper domain-containing protein 1 (477 aa).

Residues 1-24 form a disordered region; that stretch reads MAASSLWGPAVAGGGESSESEDDG. Phosphoserine occurs at positions 17, 18, and 20. 6 ANK repeats span residues 45 to 74, 78 to 107, 110 to 144, 148 to 177, 181 to 210, and 214 to 243; these read EKNE…SVDS, YGWT…NASF, DKQT…DPNV, RQMT…EVNA, NGYT…NKML, and DGKT…PLEG. The 63-residue stretch at 272-334 folds into the SAM domain; that stretch reads SYTAFGELDL…KILSALKELM (63 aa).

Interacts with DDX4, PIWIL1, RANBP9 and TDRD1.

Its subcellular location is the cytoplasm. In terms of biological role, plays a central role during spermatogenesis by repressing transposable elements and preventing their mobilization, which is essential for the germline integrity. Acts via the piRNA metabolic process, which mediates the repression of transposable elements during meiosis by forming complexes composed of piRNAs and Piwi proteins and governs the methylation and subsequent repression of transposons. Its association with pi-bodies suggests a participation in the primary piRNAs metabolic process. Required prior to the pachytene stage to facilitate the production of multiple types of piRNAs, including those associated with repeats involved in the regulation of retrotransposons. May act by mediating protein-protein interactions during germ cell maturation. This is Ankyrin repeat, SAM and basic leucine zipper domain-containing protein 1 (ASZ1) from Echinops telfairi (Lesser hedgehog tenrec).